Here is a 501-residue protein sequence, read N- to C-terminus: Aldehyde dehydrogenase 1A1 (501 aa).

S2 is modified (N-acetylserine). N6-acetyllysine is present on residues K91 and K128. Residues 167–170, 193–196, 226–227, and 246–247 each bind NAD(+); these read IPWN, KPAE, GP, and GS. N6-acetyllysine is present on K252. E269 (proton acceptor) is an active-site residue. NAD(+) is bound at residue 269–271; that stretch reads ELG. C303 (nucleophile) is an active-site residue. The segment at 336-501 is mediates interaction with PRMT3; sequence LTPGVSQGPQ…VTIKISQKNS (166 aa). At T337 the chain carries Phosphothreonine. 349–353 is a binding site for NAD(+); that stretch reads EQYEK. N6-acetyllysine occurs at positions 353 and 367. An NAD(+)-binding site is contributed by 400 to 402; the sequence is EIF. Position 410 is an N6-acetyllysine (K410). The residue at position 413 (S413) is a Phosphoserine. N6-acetyllysine is present on residues K419 and K495.

Belongs to the aldehyde dehydrogenase family. Homotetramer. Interacts with PRMT3; the interaction is direct, inhibits ALDH1A1 aldehyde dehydrogenase activity and is independent of the methyltransferase activity of PRMT3. In terms of processing, the N-terminus is blocked most probably by acetylation. Expressed in muscle, liver, small intestine, kidney, brain, lung, heart but not detected in erythrocytes (at protein level).

Its subcellular location is the cytoplasm. It localises to the cytosol. The protein resides in the cell projection. The protein localises to the axon. It catalyses the reaction an aldehyde + NAD(+) + H2O = a carboxylate + NADH + 2 H(+). It carries out the reaction all-trans-retinal + NAD(+) + H2O = all-trans-retinoate + NADH + 2 H(+). The catalysed reaction is 9-cis-retinal + NAD(+) + H2O = 9-cis-retinoate + NADH + 2 H(+). The enzyme catalyses 11-cis-retinal + NAD(+) + H2O = 11-cis-retinoate + NADH + 2 H(+). It catalyses the reaction 13-cis-retinal + NAD(+) + H2O = 13-cis-retinoate + NADH + 2 H(+). It carries out the reaction 3-deoxyglucosone + NAD(+) + H2O = 2-dehydro-3-deoxy-D-gluconate + NADH + 2 H(+). The catalysed reaction is (E)-4-hydroxynon-2-enal + NAD(+) + H2O = (E)-4-hydroxynon-2-enoate + NADH + 2 H(+). The enzyme catalyses malonaldehyde + NAD(+) + H2O = 3-oxopropanoate + NADH + 2 H(+). It catalyses the reaction hexanal + NAD(+) + H2O = hexanoate + NADH + 2 H(+). It carries out the reaction propanal + NAD(+) + H2O = propanoate + NADH + 2 H(+). The catalysed reaction is acetaldehyde + NAD(+) + H2O = acetate + NADH + 2 H(+). The enzyme catalyses benzaldehyde + NAD(+) + H2O = benzoate + NADH + 2 H(+). It catalyses the reaction 4-aminobutanal + NAD(+) + H2O = 4-aminobutanoate + NADH + 2 H(+). It participates in cofactor metabolism; retinol metabolism. Its function is as follows. Cytosolic dehydrogenase that catalyzes the irreversible oxidation of a wide range of aldehydes to their corresponding carboxylic acid. Functions downstream of retinol dehydrogenases and catalyzes the oxidation of retinaldehyde into retinoic acid, the second step in the oxidation of retinol/vitamin A into retinoic acid. This pathway is crucial to control the levels of retinol and retinoic acid, two important molecules which excess can be teratogenic and cytotoxic. Also oxidizes aldehydes resulting from lipid peroxidation like (E)-4-hydroxynon-2-enal/HNE, malonaldehyde and hexanal that form protein adducts and are highly cytotoxic. By participating for instance to the clearance of (E)-4-hydroxynon-2-enal/HNE in the lens epithelium prevents the formation of HNE-protein adducts and lens opacification. Also functions downstream of fructosamine-3-kinase in the fructosamine degradation pathway by catalyzing the oxidation of 3-deoxyglucosone, the carbohydrate product of fructosamine 3-phosphate decomposition, which is itself a potent glycating agent that may react with lysine and arginine side-chains of proteins. Also has an aminobutyraldehyde dehydrogenase activity and is probably part of an alternative pathway for the biosynthesis of GABA/4-aminobutanoate in midbrain, thereby playing a role in GABAergic synaptic transmission. This chain is Aldehyde dehydrogenase 1A1, found in Bos taurus (Bovine).